The sequence spans 140 residues: Large ribosomal subunit protein uL14x/uL14z/uL14y (140 aa).

Belongs to the universal ribosomal protein uL14 family.

This chain is Large ribosomal subunit protein uL14x/uL14z/uL14y (RPL23A), found in Arabidopsis thaliana (Mouse-ear cress).